The primary structure comprises 620 residues: 1-deoxy-D-xylulose-5-phosphate synthase (620 aa).

Thiamine diphosphate contacts are provided by residues H80 and 121-123 (GHS). A Mg(2+)-binding site is contributed by D152. Thiamine diphosphate contacts are provided by residues 153 to 154 (GA), N181, Y288, and E370. N181 provides a ligand contact to Mg(2+).

Belongs to the transketolase family. DXPS subfamily. As to quaternary structure, homodimer. Mg(2+) serves as cofactor. Requires thiamine diphosphate as cofactor.

The catalysed reaction is D-glyceraldehyde 3-phosphate + pyruvate + H(+) = 1-deoxy-D-xylulose 5-phosphate + CO2. It participates in metabolic intermediate biosynthesis; 1-deoxy-D-xylulose 5-phosphate biosynthesis; 1-deoxy-D-xylulose 5-phosphate from D-glyceraldehyde 3-phosphate and pyruvate: step 1/1. In terms of biological role, catalyzes the acyloin condensation reaction between C atoms 2 and 3 of pyruvate and glyceraldehyde 3-phosphate to yield 1-deoxy-D-xylulose-5-phosphate (DXP). The chain is 1-deoxy-D-xylulose-5-phosphate synthase from Salmonella typhi.